Reading from the N-terminus, the 194-residue chain is ATP-dependent Clp protease proteolytic subunit (194 aa).

Ser98 functions as the Nucleophile in the catalytic mechanism. The active site involves His123.

Belongs to the peptidase S14 family. Fourteen ClpP subunits assemble into 2 heptameric rings which stack back to back to give a disk-like structure with a central cavity, resembling the structure of eukaryotic proteasomes.

The protein localises to the cytoplasm. It catalyses the reaction Hydrolysis of proteins to small peptides in the presence of ATP and magnesium. alpha-casein is the usual test substrate. In the absence of ATP, only oligopeptides shorter than five residues are hydrolyzed (such as succinyl-Leu-Tyr-|-NHMec, and Leu-Tyr-Leu-|-Tyr-Trp, in which cleavage of the -Tyr-|-Leu- and -Tyr-|-Trp bonds also occurs).. Its function is as follows. Cleaves peptides in various proteins in a process that requires ATP hydrolysis. Has a chymotrypsin-like activity. Plays a major role in the degradation of misfolded proteins. This Acetivibrio thermocellus (strain ATCC 27405 / DSM 1237 / JCM 9322 / NBRC 103400 / NCIMB 10682 / NRRL B-4536 / VPI 7372) (Clostridium thermocellum) protein is ATP-dependent Clp protease proteolytic subunit.